The sequence spans 239 residues: Leucyl/phenylalanyl-tRNA--protein transferase (239 aa).

It belongs to the L/F-transferase family.

It is found in the cytoplasm. The enzyme catalyses N-terminal L-lysyl-[protein] + L-leucyl-tRNA(Leu) = N-terminal L-leucyl-L-lysyl-[protein] + tRNA(Leu) + H(+). It carries out the reaction N-terminal L-arginyl-[protein] + L-leucyl-tRNA(Leu) = N-terminal L-leucyl-L-arginyl-[protein] + tRNA(Leu) + H(+). The catalysed reaction is L-phenylalanyl-tRNA(Phe) + an N-terminal L-alpha-aminoacyl-[protein] = an N-terminal L-phenylalanyl-L-alpha-aminoacyl-[protein] + tRNA(Phe). Functions in the N-end rule pathway of protein degradation where it conjugates Leu, Phe and, less efficiently, Met from aminoacyl-tRNAs to the N-termini of proteins containing an N-terminal arginine or lysine. This chain is Leucyl/phenylalanyl-tRNA--protein transferase, found in Aliivibrio fischeri (strain ATCC 700601 / ES114) (Vibrio fischeri).